The following is a 104-amino-acid chain: Large ribosomal subunit protein uL24 (104 aa).

The protein belongs to the universal ribosomal protein uL24 family. In terms of assembly, part of the 50S ribosomal subunit.

In terms of biological role, one of two assembly initiator proteins, it binds directly to the 5'-end of the 23S rRNA, where it nucleates assembly of the 50S subunit. One of the proteins that surrounds the polypeptide exit tunnel on the outside of the subunit. The sequence is that of Large ribosomal subunit protein uL24 from Proteus mirabilis (strain HI4320).